Here is a 486-residue protein sequence, read N- to C-terminus: Vacuolar-processing enzyme beta-isozyme (486 aa).

A signal peptide spans methionine 1–alanine 21. The active site involves histidine 169. The Nucleophile role is filled by cysteine 211. Cysteine 244 and cysteine 258 are disulfide-bonded. Asparagine 309 is a glycosylation site (N-linked (GlcNAc...) asparagine). 2 cysteine pairs are disulfide-bonded: cysteine 420–cysteine 450 and cysteine 432–cysteine 467.

Belongs to the peptidase C13 family. In terms of processing, auto-catalytic activation. Seed specific. Also expressed in the flowers and buds.

The protein resides in the vacuole. The protein localises to the protein storage vacuole. The catalysed reaction is Hydrolysis of proteins and small molecule substrates at -Asn-|-Xaa- bonds.. In terms of biological role, asparagine-specific endopeptidase involved in the processing of vacuolar seed protein precursors into the mature forms. Probably involved in post-translational proteolysis of seed storage proteins in the protein storage vacuole of developing seeds. The sequence is that of Vacuolar-processing enzyme beta-isozyme from Arabidopsis thaliana (Mouse-ear cress).